A 199-amino-acid polypeptide reads, in one-letter code: DnaJ homolog subfamily C member 5B (199 aa).

Serine 14 and serine 16 each carry phosphoserine. The region spanning alanine 19–glycine 84 is the J domain.

In terms of assembly, interacts with the chaperone complex consisting of HSC70 and SGTA. Post-translationally, palmitoylated.

The protein localises to the membrane. This chain is DnaJ homolog subfamily C member 5B (DNAJC5B), found in Ailuropoda melanoleuca (Giant panda).